A 435-amino-acid polypeptide reads, in one-letter code: Protoheme IX farnesyltransferase, mitochondrial (435 aa).

The N-terminal 35 residues, 1–35 (MPALCATYLIHSGNLRACLRIVPLTKPSVVIAYRH), are a transit peptide targeting the mitochondrion. Helical transmembrane passes span 135 to 155 (VLVM…ATVL), 157 to 177 (LLSL…INMG), 212 to 232 (GVIG…LLGA), 250 to 270 (IINT…GWAA), 324 to 344 (VALR…YYGI), and 401 to 421 (FWVS…HKKG).

The protein belongs to the UbiA prenyltransferase family.

The protein resides in the mitochondrion membrane. Converts protoheme IX and farnesyl diphosphate to heme O. This chain is Protoheme IX farnesyltransferase, mitochondrial (COX10), found in Eremothecium gossypii (strain ATCC 10895 / CBS 109.51 / FGSC 9923 / NRRL Y-1056) (Yeast).